The sequence spans 486 residues: Protein nucleotidyltransferase YdiU (486 aa).

Glycine 90, glycine 92, arginine 93, lysine 113, aspartate 125, glycine 126, arginine 176, and arginine 183 together coordinate ATP. Residue aspartate 252 is the Proton acceptor of the active site. Residues asparagine 253 and aspartate 262 each contribute to the Mg(2+) site. Aspartate 262 provides a ligand contact to ATP.

The protein belongs to the SELO family. Requires Mg(2+) as cofactor. Mn(2+) is required as a cofactor.

The enzyme catalyses L-seryl-[protein] + ATP = 3-O-(5'-adenylyl)-L-seryl-[protein] + diphosphate. It catalyses the reaction L-threonyl-[protein] + ATP = 3-O-(5'-adenylyl)-L-threonyl-[protein] + diphosphate. The catalysed reaction is L-tyrosyl-[protein] + ATP = O-(5'-adenylyl)-L-tyrosyl-[protein] + diphosphate. It carries out the reaction L-histidyl-[protein] + UTP = N(tele)-(5'-uridylyl)-L-histidyl-[protein] + diphosphate. The enzyme catalyses L-seryl-[protein] + UTP = O-(5'-uridylyl)-L-seryl-[protein] + diphosphate. It catalyses the reaction L-tyrosyl-[protein] + UTP = O-(5'-uridylyl)-L-tyrosyl-[protein] + diphosphate. Its function is as follows. Nucleotidyltransferase involved in the post-translational modification of proteins. It can catalyze the addition of adenosine monophosphate (AMP) or uridine monophosphate (UMP) to a protein, resulting in modifications known as AMPylation and UMPylation. The chain is Protein nucleotidyltransferase YdiU from Pseudomonas putida (strain ATCC 700007 / DSM 6899 / JCM 31910 / BCRC 17059 / LMG 24140 / F1).